The primary structure comprises 189 residues: MNLILFGPPAAGKGTQAKRLVEQRGFVQLSTGDMLRAARASGSELGQRVAKIMDEGGLVSDEIVIALIEEQLTVQAGAPGFIFDGFPRTIGQAEALDSLLESRESKVDLVIRMIVDDTRLLERVTKRFEEQGRADDNPATFSRRLERYYEDTAPLVPMYAERGVLVEIDGMGSIEAVSAEIDAALKQSA.

10–15 (AAGKGT) is a binding site for ATP. Residues 30 to 59 (STGDMLRAARASGSELGQRVAKIMDEGGLV) are NMP. AMP contacts are provided by residues Thr-31, Arg-36, 57 to 59 (GLV), 85 to 88 (GFPR), and Gln-92. Residues 126–136 (KRFEEQGRADD) are LID. An ATP-binding site is contributed by Arg-127. The AMP site is built by Arg-133 and Arg-144. Gly-172 is an ATP binding site.

Belongs to the adenylate kinase family. As to quaternary structure, monomer.

The protein localises to the cytoplasm. The enzyme catalyses AMP + ATP = 2 ADP. It participates in purine metabolism; AMP biosynthesis via salvage pathway; AMP from ADP: step 1/1. Functionally, catalyzes the reversible transfer of the terminal phosphate group between ATP and AMP. Plays an important role in cellular energy homeostasis and in adenine nucleotide metabolism. The chain is Adenylate kinase from Hyphomonas neptunium (strain ATCC 15444).